The following is a 128-amino-acid chain: Transcription antitermination protein NusB (128 aa).

It belongs to the NusB family.

In terms of biological role, involved in transcription antitermination. Required for transcription of ribosomal RNA (rRNA) genes. Binds specifically to the boxA antiterminator sequence of the ribosomal RNA (rrn) operons. This chain is Transcription antitermination protein NusB, found in Listeria monocytogenes serotype 4a (strain HCC23).